Reading from the N-terminus, the 705-residue chain is Dolichyl-diphosphooligosaccharide--protein glycosyltransferase subunit STT3A (705 aa).

The Cytoplasmic portion of the chain corresponds to methionine 1–aspartate 15. Residues threonine 16–arginine 34 form a helical membrane-spanning segment. The Lumenal segment spans residues leucine 35–aspartate 111. Residues glutamate 47–aspartate 49 carry the DXD motif 1 motif. Aspartate 49 serves as a coordination point for Mn(2+). Residues isoleucine 112–alanine 141 form a helical membrane-spanning segment. Residue glycine 142 is a topological domain, cytoplasmic. A helical transmembrane segment spans residues alanine 143 to isoleucine 158. The Lumenal portion of the chain corresponds to serine 159–glycine 170. 2 residues coordinate Mn(2+): aspartate 167 and glutamate 169. The short motif at aspartate 167–glutamate 169 is the DXD motif 2 element. The helical transmembrane segment at isoleucine 171–lysine 188 threads the bilayer. The Cytoplasmic segment spans residues threonine 189–serine 191. A helical membrane pass occupies residues isoleucine 192–serine 207. The Lumenal segment spans residues serine 208–glycine 210. A helical membrane pass occupies residues glycine 211 to threonine 229. Residues glycine 230–histidine 234 are Cytoplasmic-facing. Residues arginine 235–glutamine 253 traverse the membrane as a helical segment. The Lumenal segment spans residues isoleucine 254–serine 265. A helical transmembrane segment spans residues glutamate 266–valine 283. The Cytoplasmic segment spans residues aspartate 284–leucine 298. A helical membrane pass occupies residues phenylalanine 299–leucine 317. Over methionine 318–threonine 356 the chain is Lumenal. Residues serine 348–glutamate 351 carry the SVSE motif motif. A helical membrane pass occupies residues tryptophan 357–phenylalanine 379. Over serine 380–alanine 385 the chain is Cytoplasmic. The helical transmembrane segment at arginine 386–valine 402 threads the bilayer. Residues methionine 403–leucine 406 are Lumenal-facing. Arginine 405 provides a ligand contact to dolichyl diphosphooligosaccharide. A helical membrane pass occupies residues methionine 407–threonine 428. The Cytoplasmic segment spans residues tyrosine 429–lysine 453. Residues asparagine 454–phenylalanine 473 form a helical membrane-spanning segment. The Lumenal portion of the chain corresponds to histidine 474–threonine 705. The segment at tryptophan 525–aspartate 527 is interacts with target acceptor peptide in protein substrate. A WWDYG motif motif is present at residues tryptophan 525–glycine 529. Tyrosine 530 contributes to the dolichyl diphosphooligosaccharide binding site. Asparagine 537 and asparagine 544 each carry an N-linked (GlcNAc...) asparagine glycan. Asparagine 548 is a glycosylation site (N-linked (GlcNAc...) (high mannose) asparagine). A DK motif motif is present at residues aspartate 592–methionine 599.

It belongs to the STT3 family. In terms of assembly, component of the oligosaccharyltransferase (OST) complex. There are 2 OST complexes, OST-A and OST-B, which contain STT3A or STT3B as catalytic subunit, respectively. OST-A and OST-B contain common core subunits RPN1, RPN2, OST48, OST4, DAD1 and TMEM258, and OST-A contains DC2/OSTC and KRTCAP2/KCP2 specific accessory subunits. OST-A complex assembly occurs through the formation of 3 subcomplexes. Subcomplex 1 contains RPN1 and TMEM258, subcomplex 2 contains the OST-A-specific subunits STT3A, DC2/OSTC, and KCP2 as well as the core subunit OST4, and subcomplex 3 contains RPN2, DAD1, and OST48. The OST-A complex can form stable complexes with the Sec61 complex or with both the Sec61 and TRAP complexes. Requires Mg(2+) as cofactor. Mn(2+) serves as cofactor.

Its subcellular location is the endoplasmic reticulum membrane. It carries out the reaction a di-trans,poly-cis-dolichyl diphosphooligosaccharide + L-asparaginyl-[protein] = N(4)-(oligosaccharide-(1-&gt;4)-N-acetyl-beta-D-glucosaminyl-(1-&gt;4)-N-acetyl-beta-D-glucosaminyl)-L-asparaginyl-[protein] + a di-trans,poly-cis-dolichyl diphosphate + H(+). Its pathway is protein modification; protein glycosylation. Catalytic subunit of the oligosaccharyl transferase (OST) complex that catalyzes the initial transfer of a defined glycan (Glc(3)Man(9)GlcNAc(2) in eukaryotes) from the lipid carrier dolichol-pyrophosphate to an asparagine residue within an Asn-X-Ser/Thr consensus motif in nascent polypeptide chains, the first step in protein N-glycosylation. N-glycosylation occurs cotranslationally and the complex associates with the Sec61 complex at the channel-forming translocon complex that mediates protein translocation across the endoplasmic reticulum (ER). All subunits are required for a maximal enzyme activity. This subunit contains the active site and the acceptor peptide and donor lipid-linked oligosaccharide (LLO) binding pockets. STT3A is present in the majority of OST complexes and mediates cotranslational N-glycosylation of most sites on target proteins, while STT3B-containing complexes are required for efficient post-translational glycosylation and mediate glycosylation of sites that have been skipped by STT3A. STT3A-containing OST-A complex is also required to prevent hyperglycosylation of some target proteins by preventing glycosylation of facultative sites before folding of target proteins is completed. The chain is Dolichyl-diphosphooligosaccharide--protein glycosyltransferase subunit STT3A from Canis lupus familiaris (Dog).